Here is a 383-residue protein sequence, read N- to C-terminus: Lipid-A-disaccharide synthase (383 aa).

This sequence belongs to the LpxB family.

The catalysed reaction is a lipid X + a UDP-2-N,3-O-bis[(3R)-3-hydroxyacyl]-alpha-D-glucosamine = a lipid A disaccharide + UDP + H(+). Its pathway is bacterial outer membrane biogenesis; LPS lipid A biosynthesis. Functionally, condensation of UDP-2,3-diacylglucosamine and 2,3-diacylglucosamine-1-phosphate to form lipid A disaccharide, a precursor of lipid A, a phosphorylated glycolipid that anchors the lipopolysaccharide to the outer membrane of the cell. In Syntrophus aciditrophicus (strain SB), this protein is Lipid-A-disaccharide synthase.